Reading from the N-terminus, the 446-residue chain is MRKYFGTDGIRGRANGVITPELALKVGQAAGLLFQRGDHRHRVVIGKDTRLSGYMIETALVAGFTSVGMDVLLLGPMPTPAVAMLTRSMRADIGVMISASHNPYEDNGIKLFGPDGFKLSDEVEHEIERLLDADLQKRLSGSADLGRAKRIESVHARYIEFAKRTLPRSITLEGLRVVVDCANGAAYRVAPETLWELGAEVIAIGTEPDGFNINRDVGSTAPDALVRKVRELRADIGIALDGDADRVLVVDEKGQRVDGDQLMAVVARSWKEDQRLTQPGIVATIMSNLGLERYLGELGLGLVRTAVGDRYVLEYMREHGYNLGGEQSGHIIMSDYATTGDGLVAALQLLTVVQRQQRPVSEVCHCFDPLPQVLKNVRYRAGEPLRQDSVVTAIEGARQRLGNAGRLVIRPSGTEPVIRVMAEGDNRDLVVEVVDEVVEALRQAAA.

Residue Ser-100 is the Phosphoserine intermediate of the active site. Mg(2+) is bound by residues Ser-100, Asp-241, Asp-243, and Asp-245. A Phosphoserine modification is found at Ser-100.

Belongs to the phosphohexose mutase family. Requires Mg(2+) as cofactor. Post-translationally, activated by phosphorylation.

The enzyme catalyses alpha-D-glucosamine 1-phosphate = D-glucosamine 6-phosphate. In terms of biological role, catalyzes the conversion of glucosamine-6-phosphate to glucosamine-1-phosphate. This chain is Phosphoglucosamine mutase, found in Methylobacterium sp. (strain 4-46).